A 227-amino-acid chain; its full sequence is PKHD-type hydroxylase ABSDF3031 (227 aa).

The Fe2OG dioxygenase domain maps to 78 to 178; sequence KIIPPLFNRY…RFASFFWVQS (101 aa). The Fe cation site is built by His96, Asp98, and His159. Residue Arg169 participates in 2-oxoglutarate binding.

Requires Fe(2+) as cofactor. The cofactor is L-ascorbate.

The chain is PKHD-type hydroxylase ABSDF3031 from Acinetobacter baumannii (strain SDF).